Here is a 322-residue protein sequence, read N- to C-terminus: Probable arabinan endo-1,5-alpha-L-arabinosidase A (322 aa).

Positions 1-19 (MYLPTLAASASLLVGVAHG) are cleaved as a signal peptide. Asp34 serves as the catalytic Proton acceptor. The Proton donor role is filled by Glu201.

The protein belongs to the glycosyl hydrolase 43 family.

The protein localises to the secreted. It carries out the reaction Endohydrolysis of (1-&gt;5)-alpha-arabinofuranosidic linkages in (1-&gt;5)-arabinans.. Its pathway is glycan metabolism; L-arabinan degradation. Its function is as follows. Endo-1,5-alpha-L-arabinanase involved in degradation of pectin. Its preferred substrate is linear 1,5-alpha-L-arabinan. The protein is Probable arabinan endo-1,5-alpha-L-arabinosidase A (abnA) of Emericella nidulans (strain FGSC A4 / ATCC 38163 / CBS 112.46 / NRRL 194 / M139) (Aspergillus nidulans).